The sequence spans 1732 residues: Serine/threonine-protein kinase MRCK alpha (1732 aa).

Residues 77 to 343 enclose the Protein kinase domain; sequence FEILKVIGRG…IEDFKKHPFF (267 aa). ATP contacts are provided by residues 83-91 and Lys106; that span reads IGRGAFGEV. Asp201 acts as the Proton acceptor in catalysis. Residues Ser222 and Ser234 each carry the phosphoserine; by autocatalysis modification. Position 240 is a phosphothreonine; by autocatalysis (Thr240). The AGC-kinase C-terminal domain occupies 344-414; the sequence is SGIDWDNIRN…TSSCVLSDRS (71 aa). Coiled-coil stretches lie at residues 437-820 and 880-943; these read NNLA…WEAQ and LELQ…SEKG. The disordered stretch occupies residues 968–1003; the sequence is ERSPSCTPASKGRRTVDSTPLSVHTPTLRKKGCPGS. Residues 1012–1062 form a Phorbol-ester/DAG-type zinc finger; that stretch reads THQFFVKSFTTPTKCHQCTSLMVGLIRQGCSCEVCGFSCHITCVNKAPTTC. A PH domain is found at 1082–1201; the sequence is GTAYEGHVRI…WVGVLSELHK (120 aa). Phosphoserine is present on Ser1127. The CNH domain occupies 1227 to 1499; it reads IKTTQAAAII…RPLNNEGSLN (273 aa). Residue Ser1545 is modified to Phosphoserine. The 14-residue stretch at 1571–1584 folds into the CRIB domain; it reads ISNPTNFNHIAHMG. A disordered region spans residues 1591 to 1732; that stretch reads ILKDLPMNPR…ESTDRGSWDP (142 aa). Residues 1604–1619 show a composition bias toward polar residues; that stretch reads SRTVFSGSVSIPSITK. Ser1611, Ser1613, Ser1629, Ser1651, Ser1664, Ser1669, and Ser1693 each carry phosphoserine. Positions 1625 to 1640 are enriched in low complexity; it reads GRSMSASSGLSARSSA. The segment covering 1665-1674 has biased composition (low complexity); sequence PSEGSLSSGG. The segment covering 1697-1707 has biased composition (low complexity); sequence STASNSSNLSS. Phosphoserine is present on residues Ser1719 and Ser1721.

Belongs to the protein kinase superfamily. AGC Ser/Thr protein kinase family. DMPK subfamily. Homodimer and homotetramer via the coiled coil regions. Interacts tightly with GTP-bound but not GDP-bound CDC42. Forms a tripartite complex with MYO18A and LURAP1 with the latter acting as an adapter connecting CDC42BPA and MYO18A. LURAP1 binding results in activation of CDC42BPA by abolition of its negative autoregulation. Interacts with LURAP1. Interacts (via AGC-kinase C-terminal domain) with FAM89B/LRAP25 (via LRR repeat). Forms a tripartite complex with FAM89B/LRAP25 and LIMK1. Mg(2+) serves as cofactor. Post-translationally, proteolytically cleaved by caspases upon apoptosis induction. The cleavage at Asp-478 by CASP3 increases its kinase activity (in vitro). In terms of tissue distribution, abundant in the heart, brain, skeletal muscle, kidney, and pancreas, with little or no expression in the lung and liver.

The protein resides in the cytoplasm. It is found in the cell projection. Its subcellular location is the lamellipodium. The enzyme catalyses L-seryl-[protein] + ATP = O-phospho-L-seryl-[protein] + ADP + H(+). It carries out the reaction L-threonyl-[protein] + ATP = O-phospho-L-threonyl-[protein] + ADP + H(+). With respect to regulation, maintained in an inactive, closed conformation by an interaction between the kinase domain and the negative autoregulatory C-terminal coiled-coil region. Agonist binding to the phorbol ester binding site disrupts this, releasing the kinase domain to allow N-terminus-mediated dimerization and kinase activation by transautophosphorylation. Inhibited by chelerythrine chloride. Functionally, serine/threonine-protein kinase which is an important downstream effector of CDC42 and plays a role in the regulation of cytoskeleton reorganization and cell migration. Regulates actin cytoskeletal reorganization via phosphorylation of PPP1R12C and MYL9/MLC2. In concert with MYO18A and LURAP1, is involved in modulating lamellar actomyosin retrograde flow that is crucial to cell protrusion and migration. Phosphorylates: PPP1R12A, LIMK1 and LIMK2. May play a role in TFRC-mediated iron uptake. In concert with FAM89B/LRAP25 mediates the targeting of LIMK1 to the lamellipodium resulting in its activation and subsequent phosphorylation of CFL1 which is important for lamellipodial F-actin regulation. Triggers the formation of an extrusion apical actin ring required for epithelial extrusion of apoptotic cells. The polypeptide is Serine/threonine-protein kinase MRCK alpha (Homo sapiens (Human)).